Reading from the N-terminus, the 378-residue chain is UDP-N-acetylglucosamine--N-acetylmuramyl-(pentapeptide) pyrophosphoryl-undecaprenol N-acetylglucosamine transferase (378 aa).

UDP-N-acetyl-alpha-D-glucosamine is bound by residues 14-16 (TGG), Asn125, Arg165, Ser193, and Gln293.

This sequence belongs to the glycosyltransferase 28 family. MurG subfamily.

Its subcellular location is the cell inner membrane. The catalysed reaction is di-trans,octa-cis-undecaprenyl diphospho-N-acetyl-alpha-D-muramoyl-L-alanyl-D-glutamyl-meso-2,6-diaminopimeloyl-D-alanyl-D-alanine + UDP-N-acetyl-alpha-D-glucosamine = di-trans,octa-cis-undecaprenyl diphospho-[N-acetyl-alpha-D-glucosaminyl-(1-&gt;4)]-N-acetyl-alpha-D-muramoyl-L-alanyl-D-glutamyl-meso-2,6-diaminopimeloyl-D-alanyl-D-alanine + UDP + H(+). The protein operates within cell wall biogenesis; peptidoglycan biosynthesis. Its function is as follows. Cell wall formation. Catalyzes the transfer of a GlcNAc subunit on undecaprenyl-pyrophosphoryl-MurNAc-pentapeptide (lipid intermediate I) to form undecaprenyl-pyrophosphoryl-MurNAc-(pentapeptide)GlcNAc (lipid intermediate II). In Bartonella bacilliformis (strain ATCC 35685 / KC583 / Herrer 020/F12,63), this protein is UDP-N-acetylglucosamine--N-acetylmuramyl-(pentapeptide) pyrophosphoryl-undecaprenol N-acetylglucosamine transferase.